A 61-amino-acid polypeptide reads, in one-letter code: ERMES regulator 1 (61 aa).

Residues 1–20 (MLPNLRRIFASFRTEEEERS) lie on the Mitochondrial intermembrane side of the membrane. The helical transmembrane segment at 21-43 (YSRKAFFHLIGYITCSVLFSWLV) threads the bilayer. At 44–61 (RKKVISSPVVSSPIHALS) the chain is on the cytoplasmic side.

This sequence belongs to the EMR1 family. Interacts with the ER-mitochondria encounter structure (ERMES) complex. Interacts with mdm12. Interacts with mdm34.

Its subcellular location is the mitochondrion outer membrane. Functionally, mediates the formation of endoplasmic reticulum (ER)-mitochondria encounter structure (ERMES) foci, thereby contributing to the formation of ER-mitochondrial contact sites. This is ERMES regulator 1 from Schizosaccharomyces pombe (strain 972 / ATCC 24843) (Fission yeast).